The chain runs to 261 residues: MPKLEEIDDLEDIDNLHMDLAELDASLKTPIAPRLKPTVVRSQDSEPPLFPQIPLEGEQGPSFTFIDPKSGRVEETTKITKEDLADLKRFQILYPCYFDKNRTHAQGRQVPLELAVANPLAKTIADACRELEVLCVFEGEKTHPQDFGNPGRVRVLLKENGKAAGKYANKRWLMKNVAKYLQEHPTTLESLREIPYGPDFEGIEPSKIPLVHGFQMNEIVPLHSPFTMGHPMTKGIYTAPKVVAPEKQIKAPKNKYKVVRR.

Belongs to the SRP19 family. Fungal signal recognition particle consists of a 7S RNA molecule (scR1) and at least six protein subunits: SRP72, SRP68, SRP54, SEC65, SRP21 and SRP14.

The protein localises to the cytoplasm. Signal-recognition-particle assembly has a crucial role in targeting secretory proteins to the rough endoplasmic reticulum membrane. It must be involved intimately in the translocation of a wide variety of protein substrates. The polypeptide is Signal recognition particle SEC65 subunit (SEC65) (Eremothecium gossypii (strain ATCC 10895 / CBS 109.51 / FGSC 9923 / NRRL Y-1056) (Yeast)).